The primary structure comprises 501 residues: Chromosomal replication initiator protein DnaA (501 aa).

A domain I, interacts with DnaA modulators region spans residues 1–90; it reads MSVELWQQCV…KRSSAPRAAP (90 aa). A domain II region spans residues 91–164; sequence NAPLAAAASQ…QVEGALKHTS (74 aa). Over residues 103–121 the composition is skewed to low complexity; that stretch reads AAPVASTPAPAPSKSSAKK. The disordered stretch occupies residues 103–150; sequence AAPVASTPAPAPSKSSAKKNAAENEEPSRDSFDPMAGASSQQAPIRAE. Over residues 122-134 the composition is skewed to basic and acidic residues; it reads NAAENEEPSRDSF. A domain III, AAA+ region region spans residues 165-381; it reads YLNRTFTFEN…GALKRVIAHS (217 aa). Positions 209, 211, 212, and 213 each coordinate ATP. Residues 382 to 501 form a domain IV, binds dsDNA region; that stretch reads HFMGRDITIE…YKNLLRTLTT (120 aa).

Belongs to the DnaA family. In terms of assembly, oligomerizes as a right-handed, spiral filament on DNA at oriC.

The protein resides in the cytoplasm. Its function is as follows. Plays an essential role in the initiation and regulation of chromosomal replication. ATP-DnaA binds to the origin of replication (oriC) to initiate formation of the DNA replication initiation complex once per cell cycle. Binds the DnaA box (a 9 base pair repeat at the origin) and separates the double-stranded (ds)DNA. Forms a right-handed helical filament on oriC DNA; dsDNA binds to the exterior of the filament while single-stranded (ss)DNA is stabiized in the filament's interior. The ATP-DnaA-oriC complex binds and stabilizes one strand of the AT-rich DNA unwinding element (DUE), permitting loading of DNA polymerase. After initiation quickly degrades to an ADP-DnaA complex that is not apt for DNA replication. Binds acidic phospholipids. The polypeptide is Chromosomal replication initiator protein DnaA (Pseudomonas fluorescens (strain SBW25)).